The sequence spans 431 residues: Bifunctional protein GlmU (431 aa).

The interval 1-223 (MNLSIVILAA…EENFKGVNSK (223 aa)) is pyrophosphorylase. UDP-N-acetyl-alpha-D-glucosamine contacts are provided by residues 8–11 (LAAG), K22, Q74, and 81–82 (GT). Residue D102 participates in Mg(2+) binding. Positions 135, 149, 164, and 221 each coordinate UDP-N-acetyl-alpha-D-glucosamine. N221 serves as a coordination point for Mg(2+). Residues 224 to 244 (ADLAEAEAIMTGRIRRRWMRE) are linker. The interval 245–431 (GVRMRLPETI…FFARYFSSSK (187 aa)) is N-acetyltransferase. UDP-N-acetyl-alpha-D-glucosamine is bound by residues R308 and K325. H336 functions as the Proton acceptor in the catalytic mechanism. Positions 339 and 350 each coordinate UDP-N-acetyl-alpha-D-glucosamine. Residues A353, 359–360 (NY), S378, A396, and R413 each bind acetyl-CoA.

It in the N-terminal section; belongs to the N-acetylglucosamine-1-phosphate uridyltransferase family. This sequence in the C-terminal section; belongs to the transferase hexapeptide repeat family. As to quaternary structure, homotrimer. Mg(2+) serves as cofactor.

It is found in the cytoplasm. The catalysed reaction is alpha-D-glucosamine 1-phosphate + acetyl-CoA = N-acetyl-alpha-D-glucosamine 1-phosphate + CoA + H(+). It catalyses the reaction N-acetyl-alpha-D-glucosamine 1-phosphate + UTP + H(+) = UDP-N-acetyl-alpha-D-glucosamine + diphosphate. It participates in nucleotide-sugar biosynthesis; UDP-N-acetyl-alpha-D-glucosamine biosynthesis; N-acetyl-alpha-D-glucosamine 1-phosphate from alpha-D-glucosamine 6-phosphate (route II): step 2/2. The protein operates within nucleotide-sugar biosynthesis; UDP-N-acetyl-alpha-D-glucosamine biosynthesis; UDP-N-acetyl-alpha-D-glucosamine from N-acetyl-alpha-D-glucosamine 1-phosphate: step 1/1. It functions in the pathway bacterial outer membrane biogenesis; LPS lipid A biosynthesis. Its function is as follows. Catalyzes the last two sequential reactions in the de novo biosynthetic pathway for UDP-N-acetylglucosamine (UDP-GlcNAc). The C-terminal domain catalyzes the transfer of acetyl group from acetyl coenzyme A to glucosamine-1-phosphate (GlcN-1-P) to produce N-acetylglucosamine-1-phosphate (GlcNAc-1-P), which is converted into UDP-GlcNAc by the transfer of uridine 5-monophosphate (from uridine 5-triphosphate), a reaction catalyzed by the N-terminal domain. In Wolinella succinogenes (strain ATCC 29543 / DSM 1740 / CCUG 13145 / JCM 31913 / LMG 7466 / NCTC 11488 / FDC 602W) (Vibrio succinogenes), this protein is Bifunctional protein GlmU.